The chain runs to 900 residues: Translation initiation factor IF-2 (900 aa).

Residues 80-95 (LEEQSRKTVEKEDQLR) are compositionally biased toward basic and acidic residues. Disordered stretches follow at residues 80-106 (LEEQ…VPGR), 149-169 (AVEA…DSPV), and 221-268 (DEFD…VDEK). Basic residues predominate over residues 253 to 262 (GKKKGKKKKK). A tr-type G domain is found at 397-567 (TRPPVVTIMG…LTEAEVRELK (171 aa)). A G1 region spans residues 406 to 413 (GHVDHGKT). 406 to 413 (GHVDHGKT) contributes to the GTP binding site. The G2 stretch occupies residues 431–435 (GITQH). The G3 stretch occupies residues 453–456 (DTPG). GTP-binding positions include 453 to 457 (DTPGH) and 507 to 510 (NKID). A G4 region spans residues 507-510 (NKID). Residues 543–545 (SAK) form a G5 region.

Belongs to the TRAFAC class translation factor GTPase superfamily. Classic translation factor GTPase family. IF-2 subfamily.

Its subcellular location is the cytoplasm. In terms of biological role, one of the essential components for the initiation of protein synthesis. Protects formylmethionyl-tRNA from spontaneous hydrolysis and promotes its binding to the 30S ribosomal subunits. Also involved in the hydrolysis of GTP during the formation of the 70S ribosomal complex. The chain is Translation initiation factor IF-2 from Chlorobium phaeovibrioides (strain DSM 265 / 1930) (Prosthecochloris vibrioformis (strain DSM 265)).